The primary structure comprises 399 residues: Elongation factor Tu (399 aa).

One can recognise a tr-type G domain in the interval 10–209 (KPHVNIGTIG…DVDEYIPTPV (200 aa)). Positions 19 to 26 (GHVDHGKT) are G1. Residue 19 to 26 (GHVDHGKT) participates in GTP binding. Residue Thr26 coordinates Mg(2+). The tract at residues 62–66 (GITIN) is G2. Positions 83 to 86 (DCPG) are G3. Residues 83-87 (DCPGH) and 138-141 (NKCD) contribute to the GTP site. The tract at residues 138–141 (NKCD) is G4. The G5 stretch occupies residues 175–177 (SAY).

Belongs to the TRAFAC class translation factor GTPase superfamily. Classic translation factor GTPase family. EF-Tu/EF-1A subfamily. As to quaternary structure, monomer.

It is found in the cytoplasm. It catalyses the reaction GTP + H2O = GDP + phosphate + H(+). In terms of biological role, GTP hydrolase that promotes the GTP-dependent binding of aminoacyl-tRNA to the A-site of ribosomes during protein biosynthesis. This is Elongation factor Tu from Bifidobacterium animalis subsp. lactis (strain AD011).